Consider the following 307-residue polypeptide: Methionyl-tRNA formyltransferase (307 aa).

Residue Ser110–Pro113 coordinates (6S)-5,6,7,8-tetrahydrofolate.

The protein belongs to the Fmt family.

It catalyses the reaction L-methionyl-tRNA(fMet) + (6R)-10-formyltetrahydrofolate = N-formyl-L-methionyl-tRNA(fMet) + (6S)-5,6,7,8-tetrahydrofolate + H(+). Attaches a formyl group to the free amino group of methionyl-tRNA(fMet). The formyl group appears to play a dual role in the initiator identity of N-formylmethionyl-tRNA by promoting its recognition by IF2 and preventing the misappropriation of this tRNA by the elongation apparatus. This Chromobacterium violaceum (strain ATCC 12472 / DSM 30191 / JCM 1249 / CCUG 213 / NBRC 12614 / NCIMB 9131 / NCTC 9757 / MK) protein is Methionyl-tRNA formyltransferase.